A 490-amino-acid polypeptide reads, in one-letter code: Argininosuccinate lyase (490 aa).

The protein belongs to the lyase 1 family. Argininosuccinate lyase subfamily.

The protein localises to the cytoplasm. It catalyses the reaction 2-(N(omega)-L-arginino)succinate = fumarate + L-arginine. It participates in amino-acid biosynthesis; L-arginine biosynthesis; L-arginine from L-ornithine and carbamoyl phosphate: step 3/3. This is Argininosuccinate lyase from Bifidobacterium longum (strain DJO10A).